A 371-amino-acid polypeptide reads, in one-letter code: RxLR effector protein PITG_12731 (371 aa).

A signal peptide spans 1 to 24 (MRFYSVLLTIVTLIASTYDAKVNA). The RxLR-dEER motif lies at 43-53 (RMLRADHADER).

It belongs to the RxLR effector family.

It is found in the secreted. It localises to the host nucleus. The protein resides in the host cytoplasm. In terms of biological role, effector that enhances P.infestans colonization of Nicotiana benthamiana leaves. The polypeptide is RxLR effector protein PITG_12731 (Phytophthora infestans (strain T30-4) (Potato late blight agent)).